A 590-amino-acid polypeptide reads, in one-letter code: Myo-inositol transporter 3A (590 aa).

Residues 1 to 57 are Cytoplasmic-facing; sequence MSATHIENRDDSFLENKGIDHIGRPENNNGSQEPPSPSGFGGHLIDENLVRVEGEDK. Residues 15 to 24 show a composition bias toward basic and acidic residues; sequence ENKGIDHIGR. The segment at 15–40 is disordered; that stretch reads ENKGIDHIGRPENNNGSQEPPSPSGF. Residues 58 to 78 traverse the membrane as a helical segment; sequence VTWYLCFLISASAIAGFLFGY. Over 79 to 105 the chain is Extracellular; that stretch reads DTGVVGVALPLVGTDLGGSALNSSQQE. N100 carries an N-linked (GlcNAc...) asparagine glycan. Residues 106–126 traverse the membrane as a helical segment; it reads IITAGTTIGAIFGSAILGGWG. Topologically, residues 127 to 132 are cytoplasmic; the sequence is DRLGRK. The helical transmembrane segment at 133–153 threads the bilayer; it reads GAILVSDVFFTIGAVIIASSY. At 154 to 157 the chain is on the extracellular side; the sequence is SVPQ. A helical transmembrane segment spans residues 158–178; sequence IIVGRIILGIGVGGAAVIAPL. The Cytoplasmic segment spans residues 179–192; sequence FITETAPTAVRGRC. A helical membrane pass occupies residues 193 to 213; it reads IGVNAFFIPFGQVVSDAIGAG. The Extracellular segment spans residues 214-222; sequence VQNMHNGWR. The helical transmembrane segment at 223 to 243 threads the bilayer; it reads LLFALGAVPSLLQLLLFHYLP. Topologically, residues 244–325 are cytoplasmic; sequence ESPRILILKG…AVSALQAAGQ (82 aa). A helical transmembrane segment spans residues 326–346; that stretch reads LTGFNTLLYYAGTLFGLLGLS. Residues 347–349 lie on the Extracellular side of the membrane; the sequence is NPA. The chain crosses the membrane as a helical span at residues 350–370; the sequence is LGGLIPAGTNAVFVLIGMSLV. Residues 371 to 376 lie on the Cytoplasmic side of the membrane; the sequence is DKVGRR. Residues 377–397 form a helical membrane-spanning segment; sequence GLLLIGVPIMLLGHVWNIVSF. Over 398-420 the chain is Extracellular; that stretch reads YYMCKPTGGFLDTSYSYDTTDVG. A helical membrane pass occupies residues 421–441; it reads IVIGGIVFFVVGYGLTYSHLV. Residues 442 to 455 lie on the Cytoplasmic side of the membrane; that stretch reads WYQAEYLTLEVRSM. Residues 456 to 476 traverse the membrane as a helical segment; the sequence is GSGIATTVCWIANLVVSVSYL. The Extracellular portion of the chain corresponds to 477–485; that stretch reads SELETMTPS. The helical transmembrane segment at 486-506 threads the bilayer; sequence GTYGFYFGISVIGFVFLVFCL. Topologically, residues 507–590 are cytoplasmic; sequence PETKQLSIDE…GGKRTPSASV (84 aa).

The protein belongs to the major facilitator superfamily. Sugar transporter (TC 2.A.1.1) family.

The protein resides in the cell membrane. The enzyme catalyses myo-inositol(out) + H(+)(out) = myo-inositol(in) + H(+)(in). Transporter for myo-inositol. The sequence is that of Myo-inositol transporter 3A (ITR3A) from Cryptococcus neoformans var. grubii serotype A (strain H99 / ATCC 208821 / CBS 10515 / FGSC 9487) (Filobasidiella neoformans var. grubii).